Here is a 596-residue protein sequence, read N- to C-terminus: Nitrite reductase (596 aa).

An N-terminal signal peptide occupies residues 1 to 29 (MRQRTPFARPGLLASAALALVLGPLAASA). The tract at residues 30–76 (QEQVAPPKDPAAALEDHKTRTDNRYEPSLDNLAQQDVAAPGAPEGVS) is N-terminal tail. H46 contacts heme c. Residues Y54 and S57 each contribute to the heme d1 site. Residues 77 to 162 (ALSDAQYNEA…ANYLLLDPAA (86 aa)) enclose the Cytochrome c domain. Heme c contacts are provided by C94, C97, H98, K108, and Y122. Heme d1 is bound by residues W138, R203, H229, R232, R245, R272, Y292, R420, Q536, and T583. Residues 163-596 (PPEFGMKEMR…NVYNTMTDTY (434 aa)) form a D1-heme domain region.

Homodimer. Heme c is required as a cofactor. The cofactor is heme.

The protein resides in the periplasm. It carries out the reaction nitric oxide + Fe(III)-[cytochrome c] + H2O = Fe(II)-[cytochrome c] + nitrite + 2 H(+). The enzyme catalyses A + NH4(+) + H2O = hydroxylamine + AH2 + H(+). The polypeptide is Nitrite reductase (nirS) (Paracoccus pantotrophus (Thiosphaera pantotropha)).